The sequence spans 170 residues: Ribosome maturation factor RimM (170 aa).

The PRC barrel domain maps to 98 to 170 (EGQYYWADLE…RIELDWDPDF (73 aa)).

It belongs to the RimM family. As to quaternary structure, binds ribosomal protein uS19.

The protein localises to the cytoplasm. In terms of biological role, an accessory protein needed during the final step in the assembly of 30S ribosomal subunit, possibly for assembly of the head region. Essential for efficient processing of 16S rRNA. May be needed both before and after RbfA during the maturation of 16S rRNA. It has affinity for free ribosomal 30S subunits but not for 70S ribosomes. The polypeptide is Ribosome maturation factor RimM (Alkalilimnicola ehrlichii (strain ATCC BAA-1101 / DSM 17681 / MLHE-1)).